Consider the following 318-residue polypeptide: UDP-N-acetylenolpyruvoylglucosamine reductase (318 aa).

In terms of domain architecture, FAD-binding PCMH-type spans 38–204 (IGGICPVVVE…LGIEILLKEG (167 aa)). Residue arginine 182 is part of the active site. The interval 212 to 232 (SLKDKRDRRNSSQPENKKSAG) is disordered. Positions 213-229 (LKDKRDRRNSSQPENKK) are enriched in basic and acidic residues. Serine 233 acts as the Proton donor in catalysis. Glutamate 310 is a catalytic residue.

The protein belongs to the MurB family. FAD is required as a cofactor.

It localises to the cytoplasm. It carries out the reaction UDP-N-acetyl-alpha-D-muramate + NADP(+) = UDP-N-acetyl-3-O-(1-carboxyvinyl)-alpha-D-glucosamine + NADPH + H(+). The protein operates within cell wall biogenesis; peptidoglycan biosynthesis. In terms of biological role, cell wall formation. The sequence is that of UDP-N-acetylenolpyruvoylglucosamine reductase from Leptospira borgpetersenii serovar Hardjo-bovis (strain JB197).